Here is a 725-residue protein sequence, read N- to C-terminus: Sesterterpene synthase btcA (725 aa).

Residues 1-333 (MANPPVTEWK…CANCPRHHAW (333 aa)) form a terpene cyclase region. Position 100 (Asp-100) interacts with Mg(2+). Substrate-binding positions include Asp-100, Asn-236, 240 to 244 (SWGRE), and 329 to 330 (RH). Positions 100–104 (DDATE) match the DDXXD 1 motif. An NSE/DTE motif is present at residues 236 to 244 (NDYWSWGRE). Residues 334-722 (KEQDQAVHAV…MLYVLLQTLS (389 aa)) form a prenyltransferase region. A disordered region spans residues 352 to 426 (VEAQSPSSAT…PSSLHLLKSP (75 aa)). Over residues 355–364 (QSPSSATHTA) the composition is skewed to polar residues. Residues 375–419 (APSPISSPSSSSSAKPSSSSAADSSSCTSTSQHSPSETDSTPPSS) show a composition bias toward low complexity. The isopentenyl diphosphate site is built by Lys-442, Arg-445, and His-474. The Mg(2+) site is built by Asp-481 and Asp-485. Residues 481-485 (DDIQD) carry the DDXXD 2 motif. Position 490 (Arg-490) interacts with dimethylallyl diphosphate. Arg-491 provides a ligand contact to isopentenyl diphosphate. Lys-568, Thr-569, Gln-604, Asn-611, Lys-621, and Lys-631 together coordinate dimethylallyl diphosphate.

In the N-terminal section; belongs to the terpene synthase family. It in the C-terminal section; belongs to the FPP/GGPP synthase family. As to quaternary structure, hexamer. Mg(2+) serves as cofactor.

The enzyme catalyses isopentenyl diphosphate + (2E,6E)-farnesyl diphosphate = (2E,6E,10E)-geranylgeranyl diphosphate + diphosphate. The catalysed reaction is isopentenyl diphosphate + (2E,6E,10E)-geranylgeranyl diphosphate = (2E,6E,10E,14E)-geranylfarnesyl diphosphate + diphosphate. The protein operates within secondary metabolite biosynthesis; terpenoid biosynthesis. In terms of biological role, bifunctional terpene synthase; part of the gene cluster that mediates the biosynthesis of betaestacins. The bifunctional terpene synthase btcA converts isopentenyl diphosphate (IPP) and dimethylallyl diphosphate (DMAPP) into the sesterterpene betaestacin I. The C-terminal prenyltransferase (PT) domain of btcA catalyzes formation of GFPP, whereas the N-terminal terpene cyclase (TC) domain catalyzes the cyclization of GFPP into betaestacin I. The cytochrome P450 monooxygenase btcB is then responsible for the six-step oxidation of betaestacin I to yield betaestacin II. The roles of the cytochrome P450 monooxygenase btcC and the alpha-ketoglutarate-dependent dioxygenase btcD have not been identified yet. The protein is Sesterterpene synthase btcA of Neocamarosporium betae (Beet black rot fungus).